A 543-amino-acid polypeptide reads, in one-letter code: Sodium/glucose cotransporter (543 aa).

Transmembrane regions (helical) follow at residues 10–30, 45–65, 79–99, 129–149, 156–176, 193–213, 246–266, 287–307, 345–365, 401–421, 427–447, 455–475, 483–503, and 523–543; these read FIDI…GLWV, FLAG…AANI, SIGL…IIVG, ILAV…VLYL, TILG…ALVY, VFFL…FIGG, LPGI…YWGF, IVFA…PGIA, FLPV…IVSS, TAAV…GGIG, IQEY…LGLF, GAII…FMPL, MLYT…STSI, and SFNI…TLFW.

It localises to the cell membrane. Its function is as follows. Actively transports glucose into cells by Na(+) cotransport. This Vibrio parahaemolyticus protein is Sodium/glucose cotransporter (sglT).